The following is a 60-amino-acid chain: Temporin-CG2 (60 aa).

Residues 1-22 form the signal peptide; the sequence is MFTLKKPLLVLFFLATINLSLC. The propeptide at 23 to 43 is removed in mature form; the sequence is EQERNAEEERRDDDERNVEVE.

In terms of tissue distribution, expressed by the skin glands.

It is found in the secreted. Antimicrobial peptide active against a variety of Gram-positive bacterial strains but not against Gram-negative bacteria. Has weak antifungal activity against a slime mold isolate. Has weak hemolytic activity against human erythrocytes. The sequence is that of Temporin-CG2 from Amolops chunganensis (Chungan torrent frog).